The primary structure comprises 276 residues: Undecaprenyl-diphosphatase 1 (276 aa).

A run of 6 helical transmembrane segments spans residues 44-63 (ALAFNIIIQLGAILAVIWEY), 85-105 (VNLLIAFMPAVVLGVAFADLI), 109-129 (LFNPITVAAALVIGGIVMLWA), 183-203 (AATEFSFFLAMPTMVGAAVYS), 214-234 (GDFAVFAIGFVTSFIFAMLAV), and 249-269 (FAWYRIGFGLLILATWQLGMI).

It belongs to the UppP family.

It is found in the cell inner membrane. It carries out the reaction di-trans,octa-cis-undecaprenyl diphosphate + H2O = di-trans,octa-cis-undecaprenyl phosphate + phosphate + H(+). In terms of biological role, catalyzes the dephosphorylation of undecaprenyl diphosphate (UPP). Confers resistance to bacitracin. This chain is Undecaprenyl-diphosphatase 1, found in Stutzerimonas stutzeri (strain A1501) (Pseudomonas stutzeri).